Here is a 185-residue protein sequence, read N- to C-terminus: Small ribosomal subunit protein uS5 (185 aa).

Positions 18–81 constitute an S5 DRBM domain; it reads FVDKLVHINR…ESAKRALIRV (64 aa).

The protein belongs to the universal ribosomal protein uS5 family. As to quaternary structure, part of the 30S ribosomal subunit. Contacts proteins S4 and S8.

With S4 and S12 plays an important role in translational accuracy. Functionally, located at the back of the 30S subunit body where it stabilizes the conformation of the head with respect to the body. The protein is Small ribosomal subunit protein uS5 of Azorhizobium caulinodans (strain ATCC 43989 / DSM 5975 / JCM 20966 / LMG 6465 / NBRC 14845 / NCIMB 13405 / ORS 571).